A 264-amino-acid polypeptide reads, in one-letter code: Thymidylate synthase (264 aa).

Arg21 serves as a coordination point for dUMP. His51 is a binding site for (6R)-5,10-methylene-5,6,7,8-tetrahydrofolate. 126–127 (RR) provides a ligand contact to dUMP. Cys146 (nucleophile) is an active-site residue. DUMP contacts are provided by residues 166–169 (RSGD), Asn177, and 207–209 (HLY). Residue Asp169 participates in (6R)-5,10-methylene-5,6,7,8-tetrahydrofolate binding. Residue Ala263 coordinates (6R)-5,10-methylene-5,6,7,8-tetrahydrofolate.

Belongs to the thymidylate synthase family. Bacterial-type ThyA subfamily. Homodimer.

It is found in the cytoplasm. The enzyme catalyses dUMP + (6R)-5,10-methylene-5,6,7,8-tetrahydrofolate = 7,8-dihydrofolate + dTMP. The protein operates within pyrimidine metabolism; dTTP biosynthesis. In terms of biological role, catalyzes the reductive methylation of 2'-deoxyuridine-5'-monophosphate (dUMP) to 2'-deoxythymidine-5'-monophosphate (dTMP) while utilizing 5,10-methylenetetrahydrofolate (mTHF) as the methyl donor and reductant in the reaction, yielding dihydrofolate (DHF) as a by-product. This enzymatic reaction provides an intracellular de novo source of dTMP, an essential precursor for DNA biosynthesis. The polypeptide is Thymidylate synthase (Xanthomonas campestris pv. campestris (strain 8004)).